The sequence spans 507 residues: Bifunctional purine biosynthesis protein PurH (507 aa).

The region spanning 1–149 (MSESKRIKTA…KNYNDVIIVA (149 aa)) is the MGS-like domain.

Belongs to the PurH family.

The catalysed reaction is (6R)-10-formyltetrahydrofolate + 5-amino-1-(5-phospho-beta-D-ribosyl)imidazole-4-carboxamide = 5-formamido-1-(5-phospho-D-ribosyl)imidazole-4-carboxamide + (6S)-5,6,7,8-tetrahydrofolate. The enzyme catalyses IMP + H2O = 5-formamido-1-(5-phospho-D-ribosyl)imidazole-4-carboxamide. It participates in purine metabolism; IMP biosynthesis via de novo pathway; 5-formamido-1-(5-phospho-D-ribosyl)imidazole-4-carboxamide from 5-amino-1-(5-phospho-D-ribosyl)imidazole-4-carboxamide (10-formyl THF route): step 1/1. It functions in the pathway purine metabolism; IMP biosynthesis via de novo pathway; IMP from 5-formamido-1-(5-phospho-D-ribosyl)imidazole-4-carboxamide: step 1/1. This is Bifunctional purine biosynthesis protein PurH from Bacteroides thetaiotaomicron (strain ATCC 29148 / DSM 2079 / JCM 5827 / CCUG 10774 / NCTC 10582 / VPI-5482 / E50).